The chain runs to 49 residues: uncharacterized protein (49 aa).

The signal sequence occupies residues 1 to 22 (MIQKPILLSSFLFLYIRALLHS).

This is an uncharacterized protein from Saccharomyces cerevisiae (strain ATCC 204508 / S288c) (Baker's yeast).